The chain runs to 483 residues: NADH-quinone oxidoreductase subunit N (483 aa).

The next 13 membrane-spanning stretches (helical) occupy residues 7 to 27 (AILT…LGAV), 33 to 53 (ALAS…AFYI), 76 to 96 (FAKI…QDYM), 108 to 128 (VLII…DLIA), 161 to 181 (FVLG…AYGF), 196 to 216 (GGDM…GLAF), 235 to 255 (PTPI…ALFA), 272 to 292 (IVAF…IGQT), 297 to 317 (LMAY…SAGT), 323 to 343 (AMLI…AFIL), 369 to 389 (ALAI…LGFF), 402 to 422 (GLVW…FYYI), and 442 to 462 (MGLV…LGWV).

Belongs to the complex I subunit 2 family. NDH-1 is composed of 14 different subunits. Subunits NuoA, H, J, K, L, M, N constitute the membrane sector of the complex.

The protein localises to the cell inner membrane. The enzyme catalyses a quinone + NADH + 5 H(+)(in) = a quinol + NAD(+) + 4 H(+)(out). Its function is as follows. NDH-1 shuttles electrons from NADH, via FMN and iron-sulfur (Fe-S) centers, to quinones in the respiratory chain. The immediate electron acceptor for the enzyme in this species is believed to be ubiquinone. Couples the redox reaction to proton translocation (for every two electrons transferred, four hydrogen ions are translocated across the cytoplasmic membrane), and thus conserves the redox energy in a proton gradient. The polypeptide is NADH-quinone oxidoreductase subunit N (Jannaschia sp. (strain CCS1)).